The chain runs to 131 residues: Large ribosomal subunit protein bL17 (131 aa).

This sequence belongs to the bacterial ribosomal protein bL17 family. As to quaternary structure, part of the 50S ribosomal subunit. Contacts protein L32.

The polypeptide is Large ribosomal subunit protein bL17 (Burkholderia ambifaria (strain MC40-6)).